Reading from the N-terminus, the 376-residue chain is Putative C-mannosyltransferase DPY19L2P2 (376 aa).

Asn32 carries an N-linked (GlcNAc...) asparagine glycan. The next 6 membrane-spanning stretches (helical) occupy residues 52 to 72 (ACFY…LFFI), 107 to 127 (LRES…TLIL), 154 to 174 (AQFI…VGYI), 182 to 202 (IIYM…GNSM), 233 to 253 (LNCW…LKFL), and 299 to 319 (LLIY…CFIF).

This sequence belongs to the dpy-19 family. As to expression, fibroblast, lung, lymphoblast, spleen and testis.

Its subcellular location is the membrane. Its function is as follows. Probable C-mannosyltransferase that mediates C-mannosylation of tryptophan residues on target proteins. The chain is Putative C-mannosyltransferase DPY19L2P2 (DPY19L2P2) from Homo sapiens (Human).